We begin with the raw amino-acid sequence, 181 residues long: Regulator of G-protein signaling 10 (181 aa).

Positions 1–35 (MFTRAVSRLSRKRPPSDIHDGDGSSSSGHQSLKST) are disordered. Ser-24 and Ser-41 each carry phosphoserine. An RGS domain is found at 41–156 (SLENLLEDPE…LKSDLFLKPK (116 aa)). A lipid anchor (S-palmitoyl cysteine) is attached at Cys-74. Positions 155–181 (PKRTEEEEEEPPDAQTAAKRASRIYNT) are disordered. Phosphoserine is present on Ser-176.

As to quaternary structure, interacts with GNAZ, GNAI1 and GNAI3. Associates specifically with the activated, GTP-bound forms of GNAZ and GNAI3.

The protein localises to the cytoplasm. Its subcellular location is the cytosol. It is found in the nucleus. Functionally, regulates G protein-coupled receptor signaling cascades, including signaling downstream of the muscarinic acetylcholine receptor CHRM2. Inhibits signal transduction by increasing the GTPase activity of G protein alpha subunits, thereby driving them into their inactive GDP-bound form. Modulates the activity of potassium channels that are activated in response to CHRM2 signaling. Activity on GNAZ is inhibited by palmitoylation of the G-protein. The polypeptide is Regulator of G-protein signaling 10 (Rgs10) (Mus musculus (Mouse)).